Consider the following 211-residue polypeptide: Flagellar calcium-binding protein (211 aa).

Positions 1 to 29 (MGACGSKGSTSDKGLASDKDGKKAKDRKE) are disordered. Positions 15–29 (LASDKDGKKAKDRKE) are enriched in basic and acidic residues. EF-hand domains are found at residues 45-80 (EAKQ…VLKL), 81-116 (DEFT…FVEF), 127-162 (YDFF…LEAW), and 164-199 (AKVE…VKLD). Positions 58, 60, 62, 64, and 69 each coordinate Ca(2+). Residues aspartate 140, serine 142, asparagine 144, glutamate 151, aspartate 177, asparagine 179, threonine 181, serine 183, and glutamate 188 each coordinate Ca(2+).

The protein belongs to the calflagin family.

It is found in the cell projection. Its subcellular location is the cilium. The protein resides in the flagellum. In terms of biological role, may contribute to the rapid motility of the trypanosomes, playing a role either in flagellar structure or in calcium metabolism. Could alternate between a GDP-bound inactive form to a calcium/GTP-bound active form. This is Flagellar calcium-binding protein (FCABP) from Trypanosoma cruzi.